A 121-amino-acid polypeptide reads, in one-letter code: Large ribosomal subunit protein bL12 (121 aa).

Belongs to the bacterial ribosomal protein bL12 family. As to quaternary structure, homodimer. Part of the ribosomal stalk of the 50S ribosomal subunit. Forms a multimeric L10(L12)X complex, where L10 forms an elongated spine to which 2 to 4 L12 dimers bind in a sequential fashion. Binds GTP-bound translation factors.

Functionally, forms part of the ribosomal stalk which helps the ribosome interact with GTP-bound translation factors. Is thus essential for accurate translation. The protein is Large ribosomal subunit protein bL12 of Pseudomonas syringae pv. tomato (strain ATCC BAA-871 / DC3000).